The primary structure comprises 216 residues: Thymidylate kinase (216 aa).

10–17 is a binding site for ATP; it reads GIDGCGKT.

It belongs to the thymidylate kinase family.

It catalyses the reaction dTMP + ATP = dTDP + ADP. In terms of biological role, phosphorylation of dTMP to form dTDP in both de novo and salvage pathways of dTTP synthesis. This chain is Thymidylate kinase, found in Prochlorococcus marinus (strain MIT 9313).